The primary structure comprises 114 residues: Large ribosomal subunit protein uL22 (114 aa).

This sequence belongs to the universal ribosomal protein uL22 family. In terms of assembly, part of the 50S ribosomal subunit.

Its function is as follows. This protein binds specifically to 23S rRNA; its binding is stimulated by other ribosomal proteins, e.g. L4, L17, and L20. It is important during the early stages of 50S assembly. It makes multiple contacts with different domains of the 23S rRNA in the assembled 50S subunit and ribosome. The globular domain of the protein is located near the polypeptide exit tunnel on the outside of the subunit, while an extended beta-hairpin is found that lines the wall of the exit tunnel in the center of the 70S ribosome. The protein is Large ribosomal subunit protein uL22 of Desulfitobacterium hafniense (strain Y51).